Consider the following 642-residue polypeptide: Bifunctional protein glk (642 aa).

The interval 1–340 (MSTGAQSKAV…QLSNRSGGAS (340 aa)) is glucokinase. An ATP-binding site is contributed by 23 to 28 (ADVGGT). Residues 341-417 (SAVFERIRQM…LKLATGLTGT (77 aa)) form the HTH rpiR-type domain. The interval 341-642 (SAVFERIRQM…SPAAKDVARD (302 aa)) is putative HTH-type transcriptional regulator. Residues 377–396 (IVDIARKADVSQPTVIRFCR) constitute a DNA-binding region (H-T-H motif). The SIS domain maps to 461-600 (AIEILNGARR…AVGVAIRRAS (140 aa)). The chain crosses the membrane as a helical span at residues 576 to 596 (SMISRILHLLMIDILAVGVAI).

The protein in the N-terminal section; belongs to the bacterial glucokinase family.

The protein resides in the membrane. The catalysed reaction is D-glucose + ATP = D-glucose 6-phosphate + ADP + H(+). This Burkholderia orbicola (strain AU 1054) protein is Bifunctional protein glk (glk).